We begin with the raw amino-acid sequence, 562 residues long: Vacuolar basic amino acid transporter 1 (562 aa).

Over 1–30 the chain is Vacuolar; the sequence is MQTLDETSNLLPPPEEAEAPPLEQKFHEYN. A helical transmembrane segment spans residues 31–51; that stretch reads LALPKFPILFSLWLGSFLSSL. The Cytoplasmic segment spans residues 52–100; sequence DSTIVANIMNRVAEEFSESSKKQWIATSFLLTNTAFQPLYGKLSDITGR. A helical membrane pass occupies residues 101-121; that stretch reads KSALLTAQFFFGLGCLLTCFA. Over 122 to 131 the chain is Vacuolar; that stretch reads RNVTEFSIAR. Asparagine 123 carries N-linked (GlcNAc...) asparagine glycosylation. Residues 132–152 traverse the membrane as a helical segment; it reads AICGIGAGGLNAISSIAVSDI. Residues 153–166 are Cytoplasmic-facing; sequence CTARERGVYQGYAN. Residues 167–187 form a helical membrane-spanning segment; that stretch reads IVFGFGQLLGAPLGGVFIETI. Residues 188–190 are Vacuolar-facing; that stretch reads GWR. A helical membrane pass occupies residues 191–211; sequence ALFGIQVPVIMLCSVLAIKNI. The Cytoplasmic portion of the chain corresponds to 212 to 232; it reads NIKLFHVPPMKERYTLKNLSR. The chain crosses the membrane as a helical span at residues 233 to 253; that stretch reads IDIFGSLSLVATISGVLFLCS. Residues 254 to 255 lie on the Vacuolar side of the membrane; sequence SQ. The chain crosses the membrane as a helical span at residues 256–276; sequence LNKLYLALFTIGSFIVFILVE. Topologically, residues 277-292 are cytoplasmic; that stretch reads RYYATEKILPFELLTR. Residues 293–313 form a helical membrane-spanning segment; that stretch reads SFCLSSAVTVISSFVVFGEIF. The Vacuolar segment spans residues 314–331; that stretch reads RSPIYLQLLQNISVTKTG. An N-linked (GlcNAc...) asparagine glycan is attached at asparagine 324. Residues 332-352 form a helical membrane-spanning segment; sequence LFLIFPSISVAVGSLVTGWVL. At 353-365 the chain is on the cytoplasmic side; that stretch reads RNTKINLAHCAYQ. The helical transmembrane segment at 366 to 386 threads the bilayer; it reads IIFGGMIMQLLGLGLGYFLLS. The Vacuolar portion of the chain corresponds to 387-419; the sequence is HLNPDYTIYDMLESITFRSNSIWWKLIYVFASV. The helical transmembrane segment at 420-440 threads the bilayer; it reads LVSFGYACLLVATLVSIVFTV. At 441 to 448 the chain is on the cytoplasmic side; the sequence is EKSQQGTM. A helical membrane pass occupies residues 449-469; that stretch reads TGVFYLWRSIGNVLGASLTLV. Topologically, residues 470-528 are vacuolar; the sequence is SYENSLSSMLWNYMFKTKRDDEYHFTKKQYYSLINDSSYLRGPNFPTDIFVRILDVYKK. Asparagine 504 carries N-linked (GlcNAc...) asparagine glycosylation. The helical transmembrane segment at 529–549 threads the bilayer; it reads AFLISYIPNIALAAVGIVLSL. The Cytoplasmic segment spans residues 550–562; the sequence is YLVKHTYKRSSSS.

It belongs to the major facilitator superfamily.

It localises to the vacuole membrane. In terms of biological role, transporter required for vacuolar uptake of at least histidine and lysine. The polypeptide is Vacuolar basic amino acid transporter 1 (VBA1) (Saccharomyces cerevisiae (strain ATCC 204508 / S288c) (Baker's yeast)).